We begin with the raw amino-acid sequence, 354 residues long: Uroporphyrinogen decarboxylase (354 aa).

Substrate contacts are provided by residues 27 to 31, D77, Y153, T208, and H326; that span reads RQAGR.

Belongs to the uroporphyrinogen decarboxylase family. As to quaternary structure, homodimer.

It is found in the cytoplasm. The enzyme catalyses uroporphyrinogen III + 4 H(+) = coproporphyrinogen III + 4 CO2. It functions in the pathway porphyrin-containing compound metabolism; protoporphyrin-IX biosynthesis; coproporphyrinogen-III from 5-aminolevulinate: step 4/4. In terms of biological role, catalyzes the decarboxylation of four acetate groups of uroporphyrinogen-III to yield coproporphyrinogen-III. This Neisseria gonorrhoeae (strain ATCC 700825 / FA 1090) protein is Uroporphyrinogen decarboxylase.